The primary structure comprises 510 residues: MQKLYAEPPPSSAPVSMASSGGGGPPSGGGGGGGGGGGGGPPPPSNNNPNPTSNGGSMSPLARSAYTMNSMGLPVGGMSSVSPQAAATFSSSVLDSAAAVASMSASMSASMSASMNASMNGSMGAAAMNSMGGNCMTPSSMSYASMGSPLGNMGGCMAMSAASMSAAGLSGTYGAMPPGSREMETGSPNSLGRSRVDKPTTYRRSYTHAKPPYSYISLITMAIQNNPTRMLTLSEIYQFIMDLFPFYRQNQQRWQNSIRHSLSFNDCFVKIPRTPDKPGKGSFWTLHPDSGNMFENGCYLRRQKRFKDEKKEAIRQLHKSPSHSSLEATSPGKKDHEDSHHMHHHHHSRLDHHQHHKEAGGASIAGVNVLSAAHSKDAEALAMLHANAELCLSQQPQHVPTHHHHQHHQLQQEELSAMMANRCHPSLITDYHSSMHPLKQEPSGYTPSSHPFSINRLLPTESKADIKMYDMSQYAGYNALSPLTNSHAALGQDSYYQSLGYHAPAGTTSL.

Disordered regions lie at residues 1–62 (MQKL…SPLA) and 175–205 (AMPP…YRRS). The segment covering 20–39 (SGGGGPPSGGGGGGGGGGGG) has biased composition (gly residues). The span at 47–60 (NNPNPTSNGGSMSP) shows a compositional bias: low complexity. Phosphoserine is present on residues Ser-187 and Ser-190. Positions 209–300 (AKPPYSYISL…GNMFENGCYL (92 aa)) form a DNA-binding region, fork-head. The tract at residues 309–359 (EKKEAIRQLHKSPSHSSLEATSPGKKDHEDSHHMHHHHHSRLDHHQHHKEA) is disordered. Ser-320, Ser-322, and Ser-330 each carry phosphoserine. Basic residues predominate over residues 341-356 (HMHHHHHSRLDHHQHH).

The protein localises to the nucleus. In terms of biological role, fkh promotes terminal as opposed to segmental development. In the absence of fkh, this developmental switch does not occur. The nuclear localization of the fkh protein suggest that fkh regulates the transcription of other, subordinate, genes. The polypeptide is Protein fork head (fkh) (Drosophila melanogaster (Fruit fly)).